A 206-amino-acid chain; its full sequence is Small ribosomal subunit protein uS4 (206 aa).

In terms of domain architecture, S4 RNA-binding spans 96 to 156 (NRLDNVTYRI…KNSKLQSRIK (61 aa)).

It belongs to the universal ribosomal protein uS4 family. As to quaternary structure, part of the 30S ribosomal subunit. Contacts protein S5. The interaction surface between S4 and S5 is involved in control of translational fidelity.

In terms of biological role, one of the primary rRNA binding proteins, it binds directly to 16S rRNA where it nucleates assembly of the body of the 30S subunit. With S5 and S12 plays an important role in translational accuracy. This Buchnera aphidicola subsp. Baizongia pistaciae (strain Bp) protein is Small ribosomal subunit protein uS4.